The sequence spans 781 residues: Ubiquitin carboxyl-terminal hydrolase 14 (781 aa).

A UBP-type zinc finger spans residues 169–279 (STCPHTENFQ…SALQIYGINI (111 aa)). Residues Cys171, His173, Cys192, Cys195, Cys204, Cys207, Cys212, His224, His228, His235, Cys253, and Cys256 each contribute to the Zn(2+) site. The USP domain occupies 323 to 781 (CGLINLGNSC…NGYIYFYTRC (459 aa)). The active-site Nucleophile is Cys332. UBA domains lie at 576-626 (DEDE…LFQH) and 649-689 (EVDE…VFNN). His737 (proton acceptor) is an active-site residue.

Belongs to the peptidase C19 family.

Its subcellular location is the cytoplasm. It is found in the nucleus. The enzyme catalyses Thiol-dependent hydrolysis of ester, thioester, amide, peptide and isopeptide bonds formed by the C-terminal Gly of ubiquitin (a 76-residue protein attached to proteins as an intracellular targeting signal).. Functionally, required for the adaptation to the presence of glucose in the growth medium; mediates the degradation of enzymes involved in gluconeogenesis when cells are shifted to glucose-containing medium. Required for proteasome-dependent catabolite degradation of fructose-1,6-bisphosphatase (FBP1). Accelerates proteasomal breakdown of ubiquitinated proteins as it disassembles free ubiquitin chains that would compete with ubiquitinated proteins to bind to the proteasome. In Saccharomyces cerevisiae (strain ATCC 204508 / S288c) (Baker's yeast), this protein is Ubiquitin carboxyl-terminal hydrolase 14 (UBP14).